The chain runs to 750 residues: Photosystem I P700 chlorophyll a apoprotein A1 (750 aa).

A run of 8 helical transmembrane segments spans residues 70–93 (VFSAHFGQLSIIFLWLSGMYFHGA), 156–179 (LYCTAIGALVFAALMLFAGWFHYH), 195–219 (LNHHLTGLLGLGSLSWAGHQIHVSL), 291–309 (IIHHHLAIAILFLIAGHMY), 346–369 (WHAQLSINLAMLGSLTIVVAHHMY), 385–411 (LSLFTHHMWIGGFLIVGAAAHAAIFMV), 433–455 (AIISHLNWVCIFLGFHSFGLYIH), and 531–549 (FLVHHIHAFTIHVTVLILL). 2 residues coordinate [4Fe-4S] cluster: Cys573 and Cys582. The next 2 membrane-spanning stretches (helical) occupy residues 589–610 (HVFLGLFWMYNSISVVIFHFSW) and 664–686 (LSAYGLFFLGAHFVWAFSLMFLF). Chlorophyll a' is bound at residue His675. The chlorophyll a site is built by Met683 and Tyr691. Residue Trp692 coordinates phylloquinone. A helical membrane pass occupies residues 724–744 (AVGVTHYLLGGIATTWAFFLA).

Belongs to the PsaA/PsaB family. As to quaternary structure, the PsaA/B heterodimer binds the P700 chlorophyll special pair and subsequent electron acceptors. PSI consists of a core antenna complex that captures photons, and an electron transfer chain that converts photonic excitation into a charge separation. The eukaryotic PSI reaction center is composed of at least 11 subunits. Requires P700 is a chlorophyll a/chlorophyll a' dimer, A0 is one or more chlorophyll a, A1 is one or both phylloquinones and FX is a shared 4Fe-4S iron-sulfur center. as cofactor.

The protein localises to the plastid. It localises to the chloroplast thylakoid membrane. The catalysed reaction is reduced [plastocyanin] + hnu + oxidized [2Fe-2S]-[ferredoxin] = oxidized [plastocyanin] + reduced [2Fe-2S]-[ferredoxin]. Its function is as follows. PsaA and PsaB bind P700, the primary electron donor of photosystem I (PSI), as well as the electron acceptors A0, A1 and FX. PSI is a plastocyanin-ferredoxin oxidoreductase, converting photonic excitation into a charge separation, which transfers an electron from the donor P700 chlorophyll pair to the spectroscopically characterized acceptors A0, A1, FX, FA and FB in turn. Oxidized P700 is reduced on the lumenal side of the thylakoid membrane by plastocyanin. This chain is Photosystem I P700 chlorophyll a apoprotein A1, found in Phaseolus vulgaris (Kidney bean).